A 341-amino-acid polypeptide reads, in one-letter code: MLSPEALTTAVDAAQQAIALADTLDVLARVKTEHLGDRSPLALARQALAVLPKEQRAEAGKRVNAARNAAQRSYDERLATLRAERDAAVLVAEGIDVTLPSTRVPAGARHPIIMLAEHVADTFIAMGWELAEGPEVETEQFNFDALNFPADHPARGEQDTFYIAPEDSRQLLRTHTSPVQIRTLLARELPVYIISIGRTFRTDELDATHTPIFHQVEGLAVDRGLSMAHLRGTLDAFARAEFGPSARTRIRPHFFPFTEPSAEVDVWFANKIGGADWVEWGGCGMVHPNVLRATGIDPDLYSGFAFGMGLERTLQFRNGIPDMRDMVEGDVRFSLPFGVGA.

Residue Glu259 coordinates Mg(2+).

Belongs to the class-II aminoacyl-tRNA synthetase family. Phe-tRNA synthetase alpha subunit type 1 subfamily. As to quaternary structure, tetramer of two alpha and two beta subunits. Mg(2+) serves as cofactor.

The protein resides in the cytoplasm. The enzyme catalyses tRNA(Phe) + L-phenylalanine + ATP = L-phenylalanyl-tRNA(Phe) + AMP + diphosphate + H(+). This Mycobacterium bovis (strain ATCC BAA-935 / AF2122/97) protein is Phenylalanine--tRNA ligase alpha subunit.